The sequence spans 287 residues: Putative sugar uptake protein spyM18_2243 (287 aa).

10 consecutive transmembrane segments (helical) span residues 4 to 26, 33 to 50, 55 to 72, 85 to 107, 117 to 134, 154 to 171, 181 to 200, 207 to 229, 234 to 256, and 268 to 285; these read IFYA…KIGG, LGMT…WLIV, TLQL…WSIG, VSVA…GVLV, FVVG…FYFS, FRAL…AVLF, SVIL…FMSF, YVIK…LLAA, LAIA…ILFL, and VVTG…LGVV.

This sequence belongs to the GRP transporter (TC 2.A.7.5) family.

It is found in the cell membrane. This chain is Putative sugar uptake protein spyM18_2243, found in Streptococcus pyogenes serotype M18 (strain MGAS8232).